Here is a 107-residue protein sequence, read N- to C-terminus: Iron-sulfur cluster assembly protein CyaY (107 aa).

The protein belongs to the frataxin family.

In terms of biological role, involved in iron-sulfur (Fe-S) cluster assembly. May act as a regulator of Fe-S biogenesis. The chain is Iron-sulfur cluster assembly protein CyaY from Enterobacter sp. (strain 638).